The sequence spans 430 residues: Serine--tRNA ligase (430 aa).

An L-serine-binding site is contributed by 237–239; it reads TAE. ATP is bound at residue 268 to 270; sequence RSE. Glutamate 291 contacts L-serine. 355 to 358 serves as a coordination point for ATP; that stretch reads EISS. An L-serine-binding site is contributed by serine 391.

This sequence belongs to the class-II aminoacyl-tRNA synthetase family. Type-1 seryl-tRNA synthetase subfamily. In terms of assembly, homodimer. The tRNA molecule binds across the dimer.

Its subcellular location is the cytoplasm. It carries out the reaction tRNA(Ser) + L-serine + ATP = L-seryl-tRNA(Ser) + AMP + diphosphate + H(+). It catalyses the reaction tRNA(Sec) + L-serine + ATP = L-seryl-tRNA(Sec) + AMP + diphosphate + H(+). It functions in the pathway aminoacyl-tRNA biosynthesis; selenocysteinyl-tRNA(Sec) biosynthesis; L-seryl-tRNA(Sec) from L-serine and tRNA(Sec): step 1/1. Catalyzes the attachment of serine to tRNA(Ser). Is also able to aminoacylate tRNA(Sec) with serine, to form the misacylated tRNA L-seryl-tRNA(Sec), which will be further converted into selenocysteinyl-tRNA(Sec). This chain is Serine--tRNA ligase, found in Shigella boydii serotype 18 (strain CDC 3083-94 / BS512).